The primary structure comprises 249 residues: MILELDCGNSFIKWRVLDSGSASASAEGVVRSDLALIENLSALPRLLLTRCRLVSVRALEETSKLVEALHEAFGVTVSCAAPAREMAGVRNGYEDFERLGLDRWLAMLGGFKLARGACLVLDFGTAATADFIAADGEHLGGFICPGMPLMRNQLRTHTRKIRYDDAAAERALERLSPGRTTVEAVERGCTLMLRGFVLTQLELARSYWGDDFTVFLTGGDADLVVDAVPQAELVPDLVFVGLAMACPLS.

Residue 6 to 13 participates in ATP binding; it reads DCGNSFIK. Substrate-binding positions include tyrosine 93 and 100 to 103; that span reads GLDR. Catalysis depends on aspartate 102, which acts as the Proton acceptor. Aspartate 122 serves as a coordination point for K(+). Threonine 125 is a binding site for ATP. Residue threonine 181 participates in substrate binding.

Belongs to the type III pantothenate kinase family. In terms of assembly, homodimer. NH4(+) is required as a cofactor. Requires K(+) as cofactor.

It localises to the cytoplasm. It carries out the reaction (R)-pantothenate + ATP = (R)-4'-phosphopantothenate + ADP + H(+). It participates in cofactor biosynthesis; coenzyme A biosynthesis; CoA from (R)-pantothenate: step 1/5. Catalyzes the phosphorylation of pantothenate (Pan), the first step in CoA biosynthesis. This Pseudomonas fluorescens (strain SBW25) protein is Type III pantothenate kinase.